The primary structure comprises 192 residues: Phosphoheptose isomerase (192 aa).

The SIS domain occupies 37-192; sequence LADSFKAGGK…IQLIEKEMVK (156 aa). 52–54 lines the substrate pocket; that stretch reads NGG. Zn(2+) contacts are provided by His61 and Glu65. Substrate is bound by residues Glu65, 93–94, 119–121, Ser124, and Gln172; these read ND and STS. Positions 172 and 180 each coordinate Zn(2+).

This sequence belongs to the SIS family. GmhA subfamily. As to quaternary structure, homotetramer. Zn(2+) is required as a cofactor.

It is found in the cytoplasm. The enzyme catalyses 2 D-sedoheptulose 7-phosphate = D-glycero-alpha-D-manno-heptose 7-phosphate + D-glycero-beta-D-manno-heptose 7-phosphate. Its pathway is carbohydrate biosynthesis; D-glycero-D-manno-heptose 7-phosphate biosynthesis; D-glycero-alpha-D-manno-heptose 7-phosphate and D-glycero-beta-D-manno-heptose 7-phosphate from sedoheptulose 7-phosphate: step 1/1. Functionally, catalyzes the isomerization of sedoheptulose 7-phosphate in D-glycero-D-manno-heptose 7-phosphate. This Escherichia coli O139:H28 (strain E24377A / ETEC) protein is Phosphoheptose isomerase.